The primary structure comprises 513 residues: ATP synthase subunit alpha (513 aa).

169–176 (GDRQTGKT) is an ATP binding site.

The protein belongs to the ATPase alpha/beta chains family. In terms of assembly, F-type ATPases have 2 components, CF(1) - the catalytic core - and CF(0) - the membrane proton channel. CF(1) has five subunits: alpha(3), beta(3), gamma(1), delta(1), epsilon(1). CF(0) has three main subunits: a(1), b(2) and c(9-12). The alpha and beta chains form an alternating ring which encloses part of the gamma chain. CF(1) is attached to CF(0) by a central stalk formed by the gamma and epsilon chains, while a peripheral stalk is formed by the delta and b chains.

The protein resides in the cell inner membrane. The catalysed reaction is ATP + H2O + 4 H(+)(in) = ADP + phosphate + 5 H(+)(out). Produces ATP from ADP in the presence of a proton gradient across the membrane. The alpha chain is a regulatory subunit. The sequence is that of ATP synthase subunit alpha from Aliivibrio fischeri (strain ATCC 700601 / ES114) (Vibrio fischeri).